The primary structure comprises 1383 residues: DNA-directed RNA polymerase subunit beta (1383 aa).

The protein belongs to the RNA polymerase beta chain family. As to quaternary structure, the RNAP catalytic core consists of 2 alpha, 1 beta, 1 beta' and 1 omega subunit. When a sigma factor is associated with the core the holoenzyme is formed, which can initiate transcription.

The catalysed reaction is RNA(n) + a ribonucleoside 5'-triphosphate = RNA(n+1) + diphosphate. In terms of biological role, DNA-dependent RNA polymerase catalyzes the transcription of DNA into RNA using the four ribonucleoside triphosphates as substrates. The polypeptide is DNA-directed RNA polymerase subunit beta (Bartonella henselae (strain ATCC 49882 / DSM 28221 / CCUG 30454 / Houston 1) (Rochalimaea henselae)).